A 354-amino-acid chain; its full sequence is Uroporphyrinogen decarboxylase (354 aa).

Residues 27–31, Asp77, Tyr154, Thr209, and His327 contribute to the substrate site; that span reads RQAGR.

Belongs to the uroporphyrinogen decarboxylase family. As to quaternary structure, homodimer.

The protein localises to the cytoplasm. It catalyses the reaction uroporphyrinogen III + 4 H(+) = coproporphyrinogen III + 4 CO2. It participates in porphyrin-containing compound metabolism; protoporphyrin-IX biosynthesis; coproporphyrinogen-III from 5-aminolevulinate: step 4/4. Catalyzes the decarboxylation of four acetate groups of uroporphyrinogen-III to yield coproporphyrinogen-III. In Escherichia coli (strain 55989 / EAEC), this protein is Uroporphyrinogen decarboxylase.